Reading from the N-terminus, the 476-residue chain is Inner membrane transporter YcaM (476 aa).

Residues 1 to 9 (MAGNVQEKQ) lie on the Cytoplasmic side of the membrane. Residues 10 to 30 (LRWYNIALMSFITVWGFGNVV) traverse the membrane as a helical segment. Residues 31–38 (NNYANQGL) lie on the Periplasmic side of the membrane. Residues 39 to 59 (VVVFSWVFIFALYFTPYALIV) traverse the membrane as a helical segment. Topologically, residues 60–80 (GQLGSTFKDGKGGVSTWIKHT) are cytoplasmic. The helical transmembrane segment at 81 to 101 (MGPGLAYLAAWTYWVVHIPYL) threads the bilayer. Topologically, residues 102–125 (AQKPQAILIALGWAMKGDGSLIKE) are periplasmic. A helical membrane pass occupies residues 126–146 (YSVVALQGLTLVLFIFFMWVA). Over 147–154 (SRGMKSLK) the chain is Cytoplasmic. Residues 155–175 (IVGSVAGIAMFVMSLLYVAMA) form a helical membrane-spanning segment. Topologically, residues 176-195 (VTAPAITEVHIATTNITWET) are periplasmic. Residues 196 to 216 (FIPHIDFTYITTISMLVFAVG) form a helical membrane-spanning segment. The Cytoplasmic portion of the chain corresponds to 217-240 (GAEKISPYVNQTRNPGKEFPKGML). A helical transmembrane segment spans residues 241–261 (CLAVMVAVCAILGSLAMGMMF). The Periplasmic portion of the chain corresponds to 262–291 (DSRNIPDDLMTNGQYYAFQKLGEYYNMGNT). A helical transmembrane segment spans residues 292–312 (LMVIYAIANTLGQVAALVFSI). Topologically, residues 313–343 (DAPLKVLLGDADSKYIPASLCRTNASGTPVN) are cytoplasmic. The chain crosses the membrane as a helical span at residues 344–364 (GYFLTLVLVAILIMLPTLGIG). Over 365–375 (DMNNLYKWLLN) the chain is Periplasmic. Residues 376-396 (LNSVVMPLRYLWVFVAFIAVV) traverse the membrane as a helical segment. The Cytoplasmic portion of the chain corresponds to 397 to 414 (RLAQKYKPEYVFIRNKPL). A helical transmembrane segment spans residues 415 to 435 (AMTVGIWCFAFTAFACLTGIF). Over 436 to 448 (PKMEAFTAEWTFQ) the chain is Periplasmic. Residues 449-469 (LALNVATPFVLVGLGLIFPLL) form a helical membrane-spanning segment. The Cytoplasmic segment spans residues 470 to 476 (ARKANSK).

This sequence belongs to the amino acid-polyamine-organocation (APC) superfamily.

The protein resides in the cell inner membrane. This Escherichia coli (strain K12) protein is Inner membrane transporter YcaM (ycaM).